Consider the following 284-residue polypeptide: Lipoyl synthase (284 aa).

[4Fe-4S] cluster-binding residues include Cys-34, Cys-39, Cys-45, Cys-60, Cys-64, Cys-67, and Ser-272. Residues 46–261 (FARRTATFMI…EEIGYKLGFK (216 aa)) form the Radical SAM core domain.

It belongs to the radical SAM superfamily. Lipoyl synthase family. [4Fe-4S] cluster is required as a cofactor.

It localises to the cytoplasm. It carries out the reaction [[Fe-S] cluster scaffold protein carrying a second [4Fe-4S](2+) cluster] + N(6)-octanoyl-L-lysyl-[protein] + 2 oxidized [2Fe-2S]-[ferredoxin] + 2 S-adenosyl-L-methionine + 4 H(+) = [[Fe-S] cluster scaffold protein] + N(6)-[(R)-dihydrolipoyl]-L-lysyl-[protein] + 4 Fe(3+) + 2 hydrogen sulfide + 2 5'-deoxyadenosine + 2 L-methionine + 2 reduced [2Fe-2S]-[ferredoxin]. Its pathway is protein modification; protein lipoylation via endogenous pathway; protein N(6)-(lipoyl)lysine from octanoyl-[acyl-carrier-protein]: step 2/2. Its function is as follows. Catalyzes the radical-mediated insertion of two sulfur atoms into the C-6 and C-8 positions of the octanoyl moiety bound to the lipoyl domains of lipoate-dependent enzymes, thereby converting the octanoylated domains into lipoylated derivatives. The sequence is that of Lipoyl synthase from Caldanaerobacter subterraneus subsp. tengcongensis (strain DSM 15242 / JCM 11007 / NBRC 100824 / MB4) (Thermoanaerobacter tengcongensis).